Here is a 153-residue protein sequence, read N- to C-terminus: Ribosome maturation factor RimP (153 aa).

Belongs to the RimP family.

The protein resides in the cytoplasm. Its function is as follows. Required for maturation of 30S ribosomal subunits. In Vesicomyosocius okutanii subsp. Calyptogena okutanii (strain HA), this protein is Ribosome maturation factor RimP.